A 147-amino-acid polypeptide reads, in one-letter code: UPF0178 protein VP2328 (147 aa).

This sequence belongs to the UPF0178 family.

The sequence is that of UPF0178 protein VP2328 from Vibrio parahaemolyticus serotype O3:K6 (strain RIMD 2210633).